The following is a 234-amino-acid chain: Protein CIST1 (234 aa).

The N-terminal stretch at 1–24 (MACPQLPPLLLLVLVVLLKAGVNY) is a signal peptide. Topologically, residues 25–180 (NTPFTDIVTS…GPRELHRNPS (156 aa)) are extracellular. Positions 41 to 121 (SPVSSLISSP…THPSSGSPSA (81 aa)) are enriched in polar residues. The segment at 41–174 (SPVSSLISSP…PAPGDTGPRE (134 aa)) is disordered. A compositionally biased stretch (low complexity) spans 122–140 (ELTPSSHSTLPSSESLTPH). A compositionally biased stretch (polar residues) spans 141–159 (WSPTSHSPGTEPLTSTDQT). A helical membrane pass occupies residues 181-201 (VVVVVCLLVSLLLIGSVVMAV). Residues 202-234 (RFCHRNESKFENLDEVSMGSVNDRLSFAHHLQE) are Cytoplasmic-facing.

The protein localises to the membrane. This Homo sapiens (Human) protein is Protein CIST1.